The chain runs to 276 residues: 4-deoxy-L-threo-5-hexosulose-uronate ketol-isomerase 2 (276 aa).

Positions 194, 196, 201, and 243 each coordinate Zn(2+).

The protein belongs to the KduI family. Zn(2+) is required as a cofactor.

It catalyses the reaction 5-dehydro-4-deoxy-D-glucuronate = 3-deoxy-D-glycero-2,5-hexodiulosonate. It functions in the pathway glycan metabolism; pectin degradation; 2-dehydro-3-deoxy-D-gluconate from pectin: step 4/5. In terms of biological role, catalyzes the isomerization of 5-dehydro-4-deoxy-D-glucuronate to 3-deoxy-D-glycero-2,5-hexodiulosonate. In Enterococcus faecalis (strain ATCC 700802 / V583), this protein is 4-deoxy-L-threo-5-hexosulose-uronate ketol-isomerase 2 (kduI2).